A 508-amino-acid polypeptide reads, in one-letter code: DNA-directed RNA polymerase subunit Rpo1C (508 aa).

The segment at 1-123 (MASLLWRDTS…EIKEKYGENL (123 aa)) is unknown. The tract at residues 124-508 (SEDVQKVLDD…IYKGYPKTKK (385 aa)) is DNA-directed RNA polymerase subunit Rpo1C.

It belongs to the RNA polymerase beta' chain family. Part of the RNA polymerase complex.

Its subcellular location is the cytoplasm. The catalysed reaction is RNA(n) + a ribonucleoside 5'-triphosphate = RNA(n+1) + diphosphate. DNA-dependent RNA polymerase (RNAP) catalyzes the transcription of DNA into RNA using the four ribonucleoside triphosphates as substrates. Forms part of the jaw domain. The chain is DNA-directed RNA polymerase subunit Rpo1C from Thermoplasma acidophilum (strain ATCC 25905 / DSM 1728 / JCM 9062 / NBRC 15155 / AMRC-C165).